A 527-amino-acid polypeptide reads, in one-letter code: Flavonoid 3',5'-hydroxylase CYP75B138 (527 aa).

Residues L6–F26 traverse the membrane as a helical segment. Position 459 (C459) interacts with heme.

This sequence belongs to the cytochrome P450 family. Requires heme as cofactor. In terms of tissue distribution, expressed in young cromes.

Its subcellular location is the membrane. It catalyses the reaction a 3',5'-unsubstituted flavanone + 2 reduced [NADPH--hemoprotein reductase] + 2 O2 = a 3',5'-dihydroxyflavanone + 2 oxidized [NADPH--hemoprotein reductase] + 2 H2O + 2 H(+). It carries out the reaction (2S)-naringenin + 2 reduced [NADPH--hemoprotein reductase] + 2 O2 = (2S)-dihydrotricetin + 2 oxidized [NADPH--hemoprotein reductase] + 2 H2O + 2 H(+). The catalysed reaction is (2R,3R)-dihydrokaempferol + 2 reduced [NADPH--hemoprotein reductase] + 2 O2 = (2R,3R)-dihydromyricetin + 2 oxidized [NADPH--hemoprotein reductase] + 2 H2O + 2 H(+). The enzyme catalyses kaempferol + 2 reduced [NADPH--hemoprotein reductase] + 2 O2 = myricetin + 2 oxidized [NADPH--hemoprotein reductase] + 2 H2O + 2 H(+). It participates in flavonoid metabolism. Flavonoid 3',5'-hydroxylase that catalyzes the 3'- and 5'-hydroxylation of flavanones, dihydroflavonols and flavonols. Converts narigenin to dihydrotricetin, dihydrokaempferol to dihydromyricetin and kaempferol to myricetin. The sequence is that of Flavonoid 3',5'-hydroxylase CYP75B138 from Crocosmia x crocosmiiflora (Montbretia).